Here is a 134-residue protein sequence, read N- to C-terminus: DNA-directed RNA polymerase subunit omega (134 aa).

The segment at 76 to 102 is disordered; sequence EVDEPEPDPASMIAAGGAAAADSEEQD.

The protein belongs to the RNA polymerase subunit omega family. As to quaternary structure, the RNAP catalytic core consists of 2 alpha, 1 beta, 1 beta' and 1 omega subunit. When a sigma factor is associated with the core the holoenzyme is formed, which can initiate transcription.

It carries out the reaction RNA(n) + a ribonucleoside 5'-triphosphate = RNA(n+1) + diphosphate. In terms of biological role, promotes RNA polymerase assembly. Latches the N- and C-terminal regions of the beta' subunit thereby facilitating its interaction with the beta and alpha subunits. The sequence is that of DNA-directed RNA polymerase subunit omega from Rhizobium etli (strain ATCC 51251 / DSM 11541 / JCM 21823 / NBRC 15573 / CFN 42).